Consider the following 562-residue polypeptide: Dihydroxy-acid dehydratase (562 aa).

Aspartate 80 lines the Mg(2+) pocket. Cysteine 121 lines the [2Fe-2S] cluster pocket. Positions 122 and 123 each coordinate Mg(2+). Position 123 is an N6-carboxylysine (lysine 123). Cysteine 194 provides a ligand contact to [2Fe-2S] cluster. Glutamate 446 is a binding site for Mg(2+). Serine 472 functions as the Proton acceptor in the catalytic mechanism.

This sequence belongs to the IlvD/Edd family. In terms of assembly, homodimer. Requires [2Fe-2S] cluster as cofactor. It depends on Mg(2+) as a cofactor.

The enzyme catalyses (2R)-2,3-dihydroxy-3-methylbutanoate = 3-methyl-2-oxobutanoate + H2O. It carries out the reaction (2R,3R)-2,3-dihydroxy-3-methylpentanoate = (S)-3-methyl-2-oxopentanoate + H2O. Its pathway is amino-acid biosynthesis; L-isoleucine biosynthesis; L-isoleucine from 2-oxobutanoate: step 3/4. It participates in amino-acid biosynthesis; L-valine biosynthesis; L-valine from pyruvate: step 3/4. Functionally, functions in the biosynthesis of branched-chain amino acids. Catalyzes the dehydration of (2R,3R)-2,3-dihydroxy-3-methylpentanoate (2,3-dihydroxy-3-methylvalerate) into 2-oxo-3-methylpentanoate (2-oxo-3-methylvalerate) and of (2R)-2,3-dihydroxy-3-methylbutanoate (2,3-dihydroxyisovalerate) into 2-oxo-3-methylbutanoate (2-oxoisovalerate), the penultimate precursor to L-isoleucine and L-valine, respectively. In Macrococcus caseolyticus (strain JCSC5402) (Macrococcoides caseolyticum), this protein is Dihydroxy-acid dehydratase.